The sequence spans 269 residues: Ubiquinone/menaquinone biosynthesis C-methyltransferase UbiE (269 aa).

S-adenosyl-L-methionine contacts are provided by residues Thr-92, Asp-113, and 141–142 (NA).

It belongs to the class I-like SAM-binding methyltransferase superfamily. MenG/UbiE family.

The enzyme catalyses a 2-demethylmenaquinol + S-adenosyl-L-methionine = a menaquinol + S-adenosyl-L-homocysteine + H(+). It catalyses the reaction a 2-methoxy-6-(all-trans-polyprenyl)benzene-1,4-diol + S-adenosyl-L-methionine = a 5-methoxy-2-methyl-3-(all-trans-polyprenyl)benzene-1,4-diol + S-adenosyl-L-homocysteine + H(+). It participates in quinol/quinone metabolism; menaquinone biosynthesis; menaquinol from 1,4-dihydroxy-2-naphthoate: step 2/2. It functions in the pathway cofactor biosynthesis; ubiquinone biosynthesis. Its function is as follows. Methyltransferase required for the conversion of demethylmenaquinol (DMKH2) to menaquinol (MKH2) and the conversion of 2-polyprenyl-6-methoxy-1,4-benzoquinol (DDMQH2) to 2-polyprenyl-3-methyl-6-methoxy-1,4-benzoquinol (DMQH2). The protein is Ubiquinone/menaquinone biosynthesis C-methyltransferase UbiE of Brucella melitensis biotype 2 (strain ATCC 23457).